Here is a 473-residue protein sequence, read N- to C-terminus: Argininosuccinate lyase (473 aa).

This sequence belongs to the lyase 1 family. Argininosuccinate lyase subfamily.

It is found in the cytoplasm. The catalysed reaction is 2-(N(omega)-L-arginino)succinate = fumarate + L-arginine. It participates in amino-acid biosynthesis; L-arginine biosynthesis; L-arginine from L-ornithine and carbamoyl phosphate: step 3/3. The polypeptide is Argininosuccinate lyase (Bordetella pertussis (strain Tohama I / ATCC BAA-589 / NCTC 13251)).